The primary structure comprises 113 residues: Large ribosomal subunit protein uL22 (113 aa).

It belongs to the universal ribosomal protein uL22 family. As to quaternary structure, part of the 50S ribosomal subunit.

Its function is as follows. This protein binds specifically to 23S rRNA; its binding is stimulated by other ribosomal proteins, e.g. L4, L17, and L20. It is important during the early stages of 50S assembly. It makes multiple contacts with different domains of the 23S rRNA in the assembled 50S subunit and ribosome. In terms of biological role, the globular domain of the protein is located near the polypeptide exit tunnel on the outside of the subunit, while an extended beta-hairpin is found that lines the wall of the exit tunnel in the center of the 70S ribosome. This chain is Large ribosomal subunit protein uL22, found in Geobacillus stearothermophilus (Bacillus stearothermophilus).